The sequence spans 266 residues: 3-methyl-2-oxobutanoate hydroxymethyltransferase 2 (266 aa).

Residues Asp-45 and Asp-84 each coordinate Mg(2+). 3-methyl-2-oxobutanoate contacts are provided by residues 45-46 (DS), Asp-84, and Lys-112. Glu-114 lines the Mg(2+) pocket. Catalysis depends on Glu-181, which acts as the Proton acceptor.

Belongs to the PanB family. As to quaternary structure, homodecamer; pentamer of dimers. The cofactor is Mg(2+).

It is found in the cytoplasm. It catalyses the reaction 3-methyl-2-oxobutanoate + (6R)-5,10-methylene-5,6,7,8-tetrahydrofolate + H2O = 2-dehydropantoate + (6S)-5,6,7,8-tetrahydrofolate. The protein operates within cofactor biosynthesis; (R)-pantothenate biosynthesis; (R)-pantoate from 3-methyl-2-oxobutanoate: step 1/2. Its function is as follows. Catalyzes the reversible reaction in which hydroxymethyl group from 5,10-methylenetetrahydrofolate is transferred onto alpha-ketoisovalerate to form ketopantoate. The chain is 3-methyl-2-oxobutanoate hydroxymethyltransferase 2 from Pseudomonas aeruginosa (strain ATCC 15692 / DSM 22644 / CIP 104116 / JCM 14847 / LMG 12228 / 1C / PRS 101 / PAO1).